The primary structure comprises 309 residues: Olfactory receptor 14A16 (309 aa).

At 1–23 the chain is on the extracellular side; sequence MANLTIVTEFILMGFSTNKNMCI. The N-linked (GlcNAc...) asparagine glycan is linked to N3. The helical transmembrane segment at 24–44 threads the bilayer; that stretch reads LHSILFLLIYLCALMGNVLII. The Cytoplasmic portion of the chain corresponds to 45-52; it reads MITTLDHH. A helical membrane pass occupies residues 53-73; sequence LHTPVYFFLKNLSFLDLCLIS. At 74 to 97 the chain is on the extracellular side; sequence VTAPKSIANSLIHNNSISFLGCVS. Residue N87 is glycosylated (N-linked (GlcNAc...) asparagine). The cysteines at positions 95 and 187 are disulfide-linked. A helical transmembrane segment spans residues 98–118; that stretch reads QVFLLLSSASAELLLLTVMSF. At 119-131 the chain is on the cytoplasmic side; sequence DRYTAICHPLHYD. A helical transmembrane segment spans residues 132–152; it reads VIMDRSTCVQRATVSWLYGGL. The Extracellular portion of the chain corresponds to 153–194; it reads IAVMHTAGTFSLSYCGSNMVHQFFCDIPQLLAISCSENLIRE. A helical membrane pass occupies residues 195-215; it reads IALILINVVLDFCCFIVIIIT. Residues 216-235 are Cytoplasmic-facing; it reads YVHVFSTVKKIPSTEGQSKA. Residues 236–255 form a helical membrane-spanning segment; it reads YSICLPHLLVVLFLSTGFIA. The Extracellular segment spans residues 256-268; that stretch reads YLKPASESPSILD. A helical transmembrane segment spans residues 269 to 289; that stretch reads AVISVFYTMLPPTFNPIIYSL. Topologically, residues 290–309 are cytoplasmic; that stretch reads RNKAIKVALGMLIKGKLTKK.

The protein belongs to the G-protein coupled receptor 1 family.

The protein localises to the cell membrane. Its function is as follows. Odorant receptor. The protein is Olfactory receptor 14A16 (OR14A16) of Homo sapiens (Human).